A 707-amino-acid polypeptide reads, in one-letter code: Elongation factor G 2 (707 aa).

A tr-type G domain is found at 8 to 290; that stretch reads ERYRNIGISA…AVIDYLPSPA (283 aa). GTP-binding positions include 17–24, 88–92, and 142–145; these read AHIDAGKT, DTPGH, and NKMD.

It belongs to the TRAFAC class translation factor GTPase superfamily. Classic translation factor GTPase family. EF-G/EF-2 subfamily.

The protein localises to the cytoplasm. Its function is as follows. Catalyzes the GTP-dependent ribosomal translocation step during translation elongation. During this step, the ribosome changes from the pre-translocational (PRE) to the post-translocational (POST) state as the newly formed A-site-bound peptidyl-tRNA and P-site-bound deacylated tRNA move to the P and E sites, respectively. Catalyzes the coordinated movement of the two tRNA molecules, the mRNA and conformational changes in the ribosome. The polypeptide is Elongation factor G 2 (Bordetella bronchiseptica (strain ATCC BAA-588 / NCTC 13252 / RB50) (Alcaligenes bronchisepticus)).